Consider the following 53-residue polypeptide: UPF0391 membrane protein Bcep18194_C7021 (53 aa).

2 helical membrane passes run Ala5 to Ala25 and Ile30 to Val50.

Belongs to the UPF0391 family.

The protein resides in the cell membrane. This is UPF0391 membrane protein Bcep18194_C7021 from Burkholderia lata (strain ATCC 17760 / DSM 23089 / LMG 22485 / NCIMB 9086 / R18194 / 383).